A 502-amino-acid chain; its full sequence is Lysine--tRNA ligase (502 aa).

Mg(2+) contacts are provided by Glu-411 and Glu-418.

It belongs to the class-II aminoacyl-tRNA synthetase family. As to quaternary structure, homodimer. Requires Mg(2+) as cofactor.

The protein localises to the cytoplasm. The catalysed reaction is tRNA(Lys) + L-lysine + ATP = L-lysyl-tRNA(Lys) + AMP + diphosphate. The protein is Lysine--tRNA ligase of Clostridium kluyveri (strain ATCC 8527 / DSM 555 / NBRC 12016 / NCIMB 10680 / K1).